The primary structure comprises 60 residues: Large ribosomal subunit protein bL32 (60 aa).

This sequence belongs to the bacterial ribosomal protein bL32 family.

The chain is Large ribosomal subunit protein bL32 from Oenococcus oeni (strain ATCC BAA-331 / PSU-1).